The primary structure comprises 1002 residues: Probable transport protein MmpL10 (1002 aa).

Helical transmembrane passes span 1–21, 177–197, 199–219, 228–248, 268–288, 306–326, 358–378, 806–826, 835–855, 862–882, 901–921, and 923–943; these read MVGC…SLAE, IAVM…TMLL, LVTI…VSLV, AIVL…VFLI, AMMS…ITFL, AIGI…ILVL, YLGA…LAHF, IVAV…RAIV, VVIS…VFLG, VPGL…MLLA, VRCT…SMSG, and LFSS…GILI.

It belongs to the resistance-nodulation-cell division (RND) (TC 2.A.6) family. MmpL subfamily.

The protein localises to the cell membrane. This chain is Probable transport protein MmpL10 (mmpL10), found in Mycobacterium bovis (strain ATCC BAA-935 / AF2122/97).